Here is a 1896-residue protein sequence, read N- to C-terminus: Plexin-A1 (1896 aa).

The first 26 residues, Met-1 to Ala-26, serve as a signal peptide directing secretion. Residues Glu-27–Val-512 enclose the Sema domain. Over Glu-27 to Pro-1244 the chain is Extracellular. Asn-77 carries N-linked (GlcNAc...) asparagine glycosylation. 10 cysteine pairs are disulfide-bonded: Cys-95/Cys-104, Cys-130/Cys-138, Cys-286/Cys-407, Cys-302/Cys-358, Cys-376/Cys-395, Cys-515/Cys-532, Cys-521/Cys-563, Cys-524/Cys-541, Cys-535/Cys-547, and Cys-598/Cys-617. 3 N-linked (GlcNAc...) asparagine glycosylation sites follow: Asn-660, Asn-672, and Asn-701. IPT/TIG domains are found at residues Pro-864–Val-959, Pro-961–Thr-1045, Pro-1048–Tyr-1147, and Pro-1150–Tyr-1236. N-linked (GlcNAc...) asparagine glycosylation is present at Asn-1043. 2 N-linked (GlcNAc...) asparagine glycosylation sites follow: Asn-1187 and Asn-1212. A helical transmembrane segment spans residues Ala-1245–Ile-1265. A coiled-coil region spans residues Leu-1264–Ala-1317. Residues Ala-1266–Ser-1896 lie on the Cytoplasmic side of the membrane.

This sequence belongs to the plexin family. In terms of assembly, interacts directly with NRP1 and NRP2. Interacts with PLXN1B. Interacts with FARP2, RND1 and KDR/VEGFR2. Binding of SEMA3A leads to dissociation of FARP2. Interacts with CRMP1, DPYSL2/CRMP2, DPYSL3/CRMP3 and DPYSL4/CRMP4. Interacts (via TIG domains) with TREM2; the interaction mediates SEMA6D binding and signaling through TYROBP. Detected in fetal brain, lung, liver and kidney.

It localises to the cell membrane. Functionally, coreceptor for SEMA3A, SEMA3C, SEMA3F and SEMA6D. Necessary for signaling by class 3 semaphorins and subsequent remodeling of the cytoskeleton. Plays a role in axon guidance, invasive growth and cell migration. Class 3 semaphorins bind to a complex composed of a neuropilin and a plexin. The plexin modulates the affinity of the complex for specific semaphorins, and its cytoplasmic domain is required for the activation of down-stream signaling events in the cytoplasm. Acts as coreceptor of TREM2 for SEMA6D in dendritic cells and is involved in the generation of immune responses and skeletal homeostasis. This Homo sapiens (Human) protein is Plexin-A1.